A 103-amino-acid polypeptide reads, in one-letter code: Small ribosomal subunit protein uS10 (103 aa).

Belongs to the universal ribosomal protein uS10 family. As to quaternary structure, part of the 30S ribosomal subunit.

In terms of biological role, involved in the binding of tRNA to the ribosomes. This is Small ribosomal subunit protein uS10 from Pelodictyon phaeoclathratiforme (strain DSM 5477 / BU-1).